Here is a 130-residue protein sequence, read N- to C-terminus: Small ribosomal subunit protein uS8 (130 aa).

The protein belongs to the universal ribosomal protein uS8 family. In terms of assembly, part of the 30S ribosomal subunit. Contacts proteins S5 and S12.

Functionally, one of the primary rRNA binding proteins, it binds directly to 16S rRNA central domain where it helps coordinate assembly of the platform of the 30S subunit. This Pseudomonas entomophila (strain L48) protein is Small ribosomal subunit protein uS8.